Consider the following 81-residue polypeptide: Protein Vpu (81 aa).

Over 1–7 the chain is Extracellular; sequence MQPLGII. The chain crosses the membrane as a helical span at residues 8-28; it reads AIAALVVAIILAIVVWTIVFI. Over 29 to 81 the chain is Cytoplasmic; that stretch reads EYRRIKKQRRIDCLLDRITERAEDSGNESEGDREKLSKLVEMGHHAPWDIDDL. 2 positions are modified to phosphoserine; by host CK2: S53 and S57.

This sequence belongs to the HIV-1 VPU protein family. Homopentamer. Interacts with host CD4 and BRTC; these interactions induce proteasomal degradation of CD4. Interacts with host BST2; this interaction leads to the degradation of host BST2. Interacts with host FBXW11. Interacts with host AP1M1; this interaction plays a role in the mistrafficking and subsequent degradation of host BST2. Interacts with host RANBP2; this interaction allows Vpu to down-regulate host BLM sumoylation. Phosphorylated by host CK2. This phosphorylation is necessary for interaction with human BTRC and degradation of CD4.

Its subcellular location is the host membrane. Its activity is regulated as follows. Ion channel activity is inhibited by hexamethylene amiloride in vitro. Functionally, enhances virion budding by targeting host CD4 and Tetherin/BST2 to proteasome degradation. Degradation of CD4 prevents any unwanted premature interactions between viral Env and its host receptor CD4 in the endoplasmic reticulum. Degradation of antiretroviral protein Tetherin/BST2 is important for virion budding, as BST2 tethers new viral particles to the host cell membrane. Mechanistically, Vpu bridges either CD4 or BST2 to BTRC, a substrate recognition subunit of the Skp1/Cullin/F-box protein E3 ubiquitin ligase, induces their ubiquitination and subsequent proteasomal degradation. The alteration of the E3 ligase specificity by Vpu seems to promote the degradation of host IKBKB, leading to NF-kappa-B down-regulation and subsequent apoptosis. Acts as a viroporin that forms an oligomeric ion channel in membranes. Modulates the host DNA repair mechanisms to promote degradation of nuclear viral cDNA in cells that are already productively infected in order to suppress immune sensing and proviral hyper-integration (superinfection). Manipulates PML-NBs and modulates SUMOylation of host BLM protein thereby enhancing its DNA-end processing activity toward viral unintegrated linear DNA. Also inhibits RAD52-mediated homologous repair of viral cDNA, preventing the generation of dead-end circular forms of single copies of the long terminal repeat and permitting sustained nucleolytic attack. This Human immunodeficiency virus type 1 group M subtype D (isolate ELI) (HIV-1) protein is Protein Vpu.